A 393-amino-acid polypeptide reads, in one-letter code: tRNA (guanine-N(7)-)-methyltransferase (393 aa).

E124, E149, and D176 together coordinate S-adenosyl-L-methionine. D232 is a substrate binding site.

This sequence belongs to the class I-like SAM-binding methyltransferase superfamily. TrmB family.

It catalyses the reaction guanosine(46) in tRNA + S-adenosyl-L-methionine = N(7)-methylguanosine(46) in tRNA + S-adenosyl-L-homocysteine. It participates in tRNA modification; N(7)-methylguanine-tRNA biosynthesis. Functionally, catalyzes the formation of N(7)-methylguanine at position 46 (m7G46) in tRNA. In Helicobacter pylori (strain HPAG1), this protein is tRNA (guanine-N(7)-)-methyltransferase.